Consider the following 115-residue polypeptide: NADH-ubiquinone oxidoreductase chain 3 (115 aa).

Transmembrane regions (helical) follow at residues 3 to 23, 55 to 75, and 87 to 107; these read LMLTLFTNATLASLLILIAFW, FFLVAITFLLFDLEIALLLPL, and VLFMALALITLLALSLAYEWI.

It belongs to the complex I subunit 3 family. Core subunit of respiratory chain NADH dehydrogenase (Complex I) which is composed of 45 different subunits. Interacts with TMEM186. Interacts with TMEM242.

Its subcellular location is the mitochondrion inner membrane. The catalysed reaction is a ubiquinone + NADH + 5 H(+)(in) = a ubiquinol + NAD(+) + 4 H(+)(out). Functionally, core subunit of the mitochondrial membrane respiratory chain NADH dehydrogenase (Complex I) which catalyzes electron transfer from NADH through the respiratory chain, using ubiquinone as an electron acceptor. Essential for the catalytic activity of complex I. The protein is NADH-ubiquinone oxidoreductase chain 3 of Dugong dugon (Dugong).